The primary structure comprises 636 residues: Putative cysteine-rich receptor-like protein kinase 33 (636 aa).

The first 25 residues, 1–25 (MRKTKKISFLIFWVVLISIIGAISS), serve as a signal peptide directing secretion. 2 consecutive Gnk2-homologous domains span residues 26–128 (QQCN…NSSF) and 138–245 (YMEH…LYPF). Residues 26–266 (QQCNETGYFE…PGSKRNISVG (241 aa)) are Extracellular-facing. N-linked (GlcNAc...) asparagine glycosylation is found at Asn29, Asn63, Asn105, Asn125, Asn149, Asn173, Asn185, Asn188, Asn250, and Asn262. A helical membrane pass occupies residues 267–287 (FFVAIVVATGVVISVLSTLVV). The Cytoplasmic portion of the chain corresponds to 288 to 636 (VLVCRKRKTD…DSLIDDLVPR (349 aa)). The 280-residue stretch at 321 to 600 (FSKCNMLGQG…MMLTSNSITL (280 aa)) folds into the Protein kinase domain. Residues 327-335 (LGQGGFGEV) and Lys349 contribute to the ATP site. Phosphotyrosine is present on Tyr394. Asp446 functions as the Proton acceptor in the catalytic mechanism. The residue at position 450 (Ser450) is a Phosphoserine. A Phosphothreonine modification is found at Thr486. Phosphotyrosine is present on Tyr494.

This sequence belongs to the protein kinase superfamily. Ser/Thr protein kinase family. CRK subfamily.

Its subcellular location is the membrane. It carries out the reaction L-seryl-[protein] + ATP = O-phospho-L-seryl-[protein] + ADP + H(+). The enzyme catalyses L-threonyl-[protein] + ATP = O-phospho-L-threonyl-[protein] + ADP + H(+). This Arabidopsis thaliana (Mouse-ear cress) protein is Putative cysteine-rich receptor-like protein kinase 33 (CRK33).